Here is a 215-residue protein sequence, read N- to C-terminus: MFEIKLNDRITEFLRKFKNSAKSNEGIDEDIDLFLKRHAIPMQSLLFYVKEYRKDSDLQCSIKELLKPLEFEFKPKAVRGLHYSEDFKKKLEFLKYQEQELEYQSMVKRSKSVFSLQEDDELTPSQINKQIKEQVTTVFNVLVSVISVVVAIWYWTGSSTNFPVHVRLLLCLFFGILVLVADVVVYNSYLKKLEEAKVKEKTKVEKKKVLSKITL.

Topologically, residues 1-134 (MFEIKLNDRI…SQINKQIKEQ (134 aa)) are cytoplasmic. Residues 135 to 155 (VTTVFNVLVSVISVVVAIWYW) traverse the membrane as a helical segment. Over 156-167 (TGSSTNFPVHVR) the chain is Lumenal. The helical transmembrane segment at 168–186 (LLLCLFFGILVLVADVVVY) threads the bilayer. Residues 187-215 (NSYLKKLEEAKVKEKTKVEKKKVLSKITL) are Cytoplasmic-facing.

The protein localises to the endoplasmic reticulum membrane. In terms of biological role, required for vacuolar ATPase assembly. The chain is Vacuolar ATPase assembly integral membrane protein VPH2 (VPH2) from Saccharomyces cerevisiae (strain ATCC 204508 / S288c) (Baker's yeast).